The following is a 626-amino-acid chain: MDRTKSKSSGFLTLSAGALGVVYGDIGTSPLYTVREIFGGAYAIQLTQENILGALSLIFWALFIIVAVKYVVFVMHADNHGEGGIMALTALALRQRHRRKHRAWIISLGLFGTALFYGDGMITPAISVLGAMEGLGIATAALSHYVVPASILILLALFLIQRRGTERVGRLFGPIMLLWFLSIGTLGFVSLRQTPEVLAALNPLHGFRFLTAHQGLGFAALGAVVLAVTGAEALYADMGHFGKAPIRVTWFAVVFPSLILNYLGQGALLIRNPEAVQNPFYLLVPEWALYPMIGLATAATVIASQAVISGAFSLTHQAIQLDYLPRQRMVHTSESERGQIYAPAVNRLLLISVLALVLAFGSSSRLASAYGLAVVGTMVVTTLLALVVAHDTWRWPGLALLVTGAVLLSVDLSFLTANLAKLGDGGWIPLSLGLILATVMSTWKKGRDVLFARLQQESESLSRFLQRLTDEPPPFRPVGTAIFLTARNLSLPFALLRNYEHNQVIHQRVILLTMTTLDKPYAAEKEKITIEALEHNFFRITTRFGFMERPNVLRMLNLCRHAGLHIDLEQTTFFLGRETLIRSAERGLNRWEEVLFISMFRNAYNPTGYFKLPVDRVVELGTVIAI.

12 helical membrane passes run 11 to 31 (FLTL…TSPL), 55 to 75 (LSLI…VFVM), 103 to 123 (AWII…GMIT), 140 to 160 (AALS…LFLI), 171 to 191 (LFGP…FVSL), 216 to 236 (LGFA…ALYA), 250 to 270 (WFAV…ALLI), 282 to 302 (LLVP…ATVI), 340 to 360 (IYAP…VLAF), 369 to 389 (AYGL…LVVA), 395 to 415 (WPGL…LSFL), and 422 to 442 (LGDG…VMST).

It belongs to the HAK/KUP transporter (TC 2.A.72) family.

It is found in the cell inner membrane. It carries out the reaction K(+)(in) + H(+)(in) = K(+)(out) + H(+)(out). In terms of biological role, transport of potassium into the cell. Likely operates as a K(+):H(+) symporter. This chain is Probable potassium transport system protein Kup, found in Methylococcus capsulatus (strain ATCC 33009 / NCIMB 11132 / Bath).